The following is a 375-amino-acid chain: Ribosomal RNA large subunit methyltransferase G (375 aa).

Belongs to the methyltransferase superfamily. RlmG family.

It localises to the cytoplasm. It catalyses the reaction guanosine(1835) in 23S rRNA + S-adenosyl-L-methionine = N(2)-methylguanosine(1835) in 23S rRNA + S-adenosyl-L-homocysteine + H(+). In terms of biological role, specifically methylates the guanine in position 1835 (m2G1835) of 23S rRNA. The chain is Ribosomal RNA large subunit methyltransferase G from Stutzerimonas stutzeri (strain A1501) (Pseudomonas stutzeri).